The sequence spans 240 residues: Tetrahydromethanopterin S-methyltransferase subunit A (240 aa).

At 1 to 218 the chain is on the cytoplasmic side; the sequence is MADKREPAPG…KFHSGVHAGK (218 aa). 5-hydroxybenzimidazolylcob(I)amide is bound at residue His-85. The helical transmembrane segment at 219–239 threads the bilayer; the sequence is VEGAMIGLTITISLLGLLLLG. Position 240 (Arg-240) is a topological domain, extracellular.

Belongs to the MtrA family. As to quaternary structure, the complex is composed of 8 subunits; MtrA, MtrB, MtrC, MtrD, MtrE, MtrF, MtrG and MtrH. It depends on 5-hydroxybenzimidazolylcob(I)amide as a cofactor.

It localises to the cell membrane. It carries out the reaction 5-methyl-5,6,7,8-tetrahydromethanopterin + coenzyme M + 2 Na(+)(in) = 5,6,7,8-tetrahydromethanopterin + methyl-coenzyme M + 2 Na(+)(out). It participates in one-carbon metabolism; methanogenesis from CO(2); methyl-coenzyme M from 5,10-methylene-5,6,7,8-tetrahydromethanopterin: step 2/2. Its function is as follows. Part of a complex that catalyzes the formation of methyl-coenzyme M and tetrahydromethanopterin from coenzyme M and methyl-tetrahydromethanopterin. This is an energy-conserving, sodium-ion translocating step. The chain is Tetrahydromethanopterin S-methyltransferase subunit A from Methanosarcina mazei (strain ATCC BAA-159 / DSM 3647 / Goe1 / Go1 / JCM 11833 / OCM 88) (Methanosarcina frisia).